The primary structure comprises 247 residues: DASH complex subunit DUO1 (247 aa).

N-acetylserine is present on serine 2. Disordered stretches follow at residues leucine 27–serine 47 and asparagine 172–arginine 247. The stretch at leucine 152–alanine 180 forms a coiled coil. Residues asparagine 232–arginine 247 show a composition bias toward polar residues.

Belongs to the DASH complex DUO1 family. As to quaternary structure, component of the DASH complex consisting of ASK1, DAD1, DAD2, DAD3, DAD4, DAM1, DUO1, HSK3, SPC19 and SPC34, with a stoichiometry of one copy of each subunit per complex. Multiple DASH complexes oligomerize to form a ring that encircles spindle microtubules and organizes the rod-like NDC80 complexes of the outer kinetochore. DASH complex oligomerization strengthens microtubule attachments. On cytoplasmic microtubules, DASH complexes appear to form patches instead of rings. Within the complex, DAM1 and DUO1 may form the microtubule connections.

The protein localises to the nucleus. The protein resides in the cytoplasm. It is found in the cytoskeleton. Its subcellular location is the spindle pole. It localises to the chromosome. The protein localises to the centromere. The protein resides in the kinetochore. Functionally, component of the DASH complex that connects microtubules with kinetochores and couples microtubule depolymerisation to chromosome movement; it is involved in retrieving kinetochores to the spindle poles before their re-orientation on the spindle in early mitosis and allows microtubule depolymerization to pull chromosomes apart and resist detachment during anaphase. Kinetochores, consisting of a centromere-associated inner segment and a microtubule-contacting outer segment, play a crucial role in chromosome segregation by mediating the physical connection between centromeric DNA and microtubules. Kinetochores also serve as an input point for the spindle assembly checkpoint, which delays anaphase until all chromosomes have bioriented on the mitotic spindle. During spindle-kinetochore attachment, kinetochores first attach to the lateral surface of spindle microtubules, which supports the congression of chromosomes toward the middle of the dividing cell; they then slide along towards the spindle pole, a process independent of the DASH complex but requiring the NDC80 complex. When the end of a disassembling microtubule reaches the laterally attached kinetochore, the DASH complex together with the NDC80 complex and STU2 convert lateral attachment to end-on capture to produce a structure that can track with microtubule shortening and sustain attachment when tension is applied across sister kinetochores upon their biorientation. Microtubule depolymerization proceeds by protofilament splaying and induces the kinetochore-attached DASH complex to slide longitudinally, thereby helping to transduce depolymerization energy into pulling forces to disjoin chromatids. Incorrect microtubule attachments are corrected by releasing microubules from the kinetochore through phosphorylation by IPL1 of kinetochore components. Links the microtubule cytoskeleton to chromosomes during interphase. Also contributes to the poleward transport of kinetochores on microtubules following centromeric DNA replication in S-phase. The sequence is that of DASH complex subunit DUO1 (DUO1) from Saccharomyces cerevisiae (strain ATCC 204508 / S288c) (Baker's yeast).